The following is a 209-amino-acid chain: MSRAATTRMGLLEVRARRAVAGKGARLLRAKREVLASELWKLVHDVLEGRARLDEALHRAVKALELAKALEGEERLASLALPAARAVPLAVTVRRVWGVPTPSVAAPPLVRAADQRGSSPVSWGPSGAAAARHHEESLEVLLTIASKELHLARLGEEIQETSRRINALEQLVLPALRSEASRIAAALDERDREDAVRLRRFRARHPRPA.

This sequence belongs to the V-ATPase D subunit family.

Produces ATP from ADP in the presence of a proton gradient across the membrane. The protein is V-type ATP synthase subunit D of Anaeromyxobacter sp. (strain K).